The following is a 327-amino-acid chain: Lipoyl synthase (327 aa).

Positions 75, 80, 86, 101, 105, 108, and 315 each coordinate [4Fe-4S] cluster. Positions 87 to 304 (FGNGTATFMI…EEEAYKMGFS (218 aa)) constitute a Radical SAM core domain.

It belongs to the radical SAM superfamily. Lipoyl synthase family. Requires [4Fe-4S] cluster as cofactor.

The protein localises to the cytoplasm. It carries out the reaction [[Fe-S] cluster scaffold protein carrying a second [4Fe-4S](2+) cluster] + N(6)-octanoyl-L-lysyl-[protein] + 2 oxidized [2Fe-2S]-[ferredoxin] + 2 S-adenosyl-L-methionine + 4 H(+) = [[Fe-S] cluster scaffold protein] + N(6)-[(R)-dihydrolipoyl]-L-lysyl-[protein] + 4 Fe(3+) + 2 hydrogen sulfide + 2 5'-deoxyadenosine + 2 L-methionine + 2 reduced [2Fe-2S]-[ferredoxin]. The protein operates within protein modification; protein lipoylation via endogenous pathway; protein N(6)-(lipoyl)lysine from octanoyl-[acyl-carrier-protein]: step 2/2. Functionally, catalyzes the radical-mediated insertion of two sulfur atoms into the C-6 and C-8 positions of the octanoyl moiety bound to the lipoyl domains of lipoate-dependent enzymes, thereby converting the octanoylated domains into lipoylated derivatives. The protein is Lipoyl synthase of Variovorax paradoxus (strain S110).